We begin with the raw amino-acid sequence, 317 residues long: MATH domain and coiled-coil domain-containing protein At3g58240 (317 aa).

One can recognise an MATH domain in the interval 6 to 131; that stretch reads DNKFTWVIKN…DGEVEIVAQI (126 aa). Positions 254–305 form a coiled coil; it reads KLDWLEKKLDEVKEIKKKCERVTEMEKELHDLMNKHTNVSKLLEKEKLEIKN.

The polypeptide is MATH domain and coiled-coil domain-containing protein At3g58240 (Arabidopsis thaliana (Mouse-ear cress)).